A 73-amino-acid polypeptide reads, in one-letter code: MMTKTNLKMGARTLALSVLATLVLSASALAKIEEGKLVIWINGDKGYNGLAQVGEKFEKDTGVNVTVEHPDKL.

A signal peptide spans 1-30 (MMTKTNLKMGARTLALSVLATLVLSASALA).

The protein belongs to the bacterial solute-binding protein 1 family.

The protein localises to the periplasm. In terms of biological role, involved in the high-affinity maltose membrane transport system. Initial receptor for the active transport of and chemotaxis toward maltooligosaccharides. This chain is Maltose-binding periplasmic protein (malE), found in Photorhabdus luminescens (Xenorhabdus luminescens).